Consider the following 264-residue polypeptide: Cysteine-rich repeat secretory protein 26 (264 aa).

Positions 1–27 (MSSNIFGSVPILVVVAIQLLLVHNVSS) are cleaved as a signal peptide. Gnk2-homologous domains follow at residues 34 to 142 (YLNH…SVDS) and 148 to 261 (YKRM…LYPF).

This sequence belongs to the cysteine-rich repeat secretory protein family.

It is found in the secreted. In Arabidopsis thaliana (Mouse-ear cress), this protein is Cysteine-rich repeat secretory protein 26 (CRRSP26).